The primary structure comprises 262 residues: Thiazole synthase (262 aa).

Lys-97 (schiff-base intermediate with DXP) is an active-site residue. Residues Gly-158, 185–186 (AG), and 207–208 (NT) each bind 1-deoxy-D-xylulose 5-phosphate.

This sequence belongs to the ThiG family. Homotetramer. Forms heterodimers with either ThiH or ThiS.

It localises to the cytoplasm. The enzyme catalyses [ThiS sulfur-carrier protein]-C-terminal-Gly-aminoethanethioate + 2-iminoacetate + 1-deoxy-D-xylulose 5-phosphate = [ThiS sulfur-carrier protein]-C-terminal Gly-Gly + 2-[(2R,5Z)-2-carboxy-4-methylthiazol-5(2H)-ylidene]ethyl phosphate + 2 H2O + H(+). Its pathway is cofactor biosynthesis; thiamine diphosphate biosynthesis. In terms of biological role, catalyzes the rearrangement of 1-deoxy-D-xylulose 5-phosphate (DXP) to produce the thiazole phosphate moiety of thiamine. Sulfur is provided by the thiocarboxylate moiety of the carrier protein ThiS. In vitro, sulfur can be provided by H(2)S. The chain is Thiazole synthase from Neisseria gonorrhoeae (strain ATCC 700825 / FA 1090).